The sequence spans 299 residues: Anti-sigma-D factor RsdA (299 aa).

Residues 86-106 (LAAVGSVAAALLVLSGFGAVV) form a helical membrane-spanning segment. The segment at 187–299 (NTKVETRDPN…APETPVSPTH (113 aa)) is disordered. Composition is skewed to low complexity over residues 201-212 (PGSPSNPAAPGS) and 250-271 (PNSTSTVAASPSTPSSKPEPGS).

In terms of assembly, interacts with ECF RNA polymerase sigma factor SigD; this should inhibit the interaction of SigD with the RNA polymerase catalytic core. In terms of processing, the cytosolic fragment is degraded by a ClpP1-ClpP2-ClpX complex, as would be expected after S1P and S2P intramembrane proteolysis. This releases SigD so that it may bind to the RNA polymerase catalytic core.

The protein localises to the cell membrane. Its function is as follows. An anti-sigma factor for extracytoplasmic function (ECF) sigma factor SigD. ECF sigma factors are held in an inactive form by an anti-sigma factor until released by regulated intramembrane proteolysis (RIP). RIP occurs when an extracytoplasmic signal triggers a concerted proteolytic cascade to transmit information and elicit cellular responses. The membrane-spanning regulatory substrate protein is first cut extracytoplasmically (site-1 protease, S1P), then within the membrane itself (site-2 protease, S2P), while cytoplasmic proteases finish degrading the regulatory protein, liberating the sigma factor. Neither S1P nor S2P proteases have been so far identified for this anti-sigma factor. This Mycobacterium bovis (strain ATCC BAA-935 / AF2122/97) protein is Anti-sigma-D factor RsdA (rsda).